The chain runs to 454 residues: Putative F-box/LRR-repeat protein At3g58880 (454 aa).

Positions 2-48 constitute an F-box domain; it reads VDLVSSLPDDLLGHILSLLTTKEAALTSILSKRWRYLIAFVPYLEFD. LRR repeat units lie at residues 77–102, 144–168, 169–194, 214–240, 270–301, 303–327, and 328–353; these read LALH…DLLN, SGCR…TLDS, VSWS…NLAN, IKSV…NYTA, LVSV…YLSP, TLQV…VIES, and SMDI…VIKG.

In Arabidopsis thaliana (Mouse-ear cress), this protein is Putative F-box/LRR-repeat protein At3g58880.